We begin with the raw amino-acid sequence, 201 residues long: Probable molybdenum cofactor guanylyltransferase (201 aa).

Residues 20-22, K32, D77, and D106 contribute to the GTP site; that span reads LAG. A Mg(2+)-binding site is contributed by D106.

Belongs to the MobA family. Mg(2+) serves as cofactor.

It localises to the cytoplasm. The enzyme catalyses Mo-molybdopterin + GTP + H(+) = Mo-molybdopterin guanine dinucleotide + diphosphate. Its function is as follows. Transfers a GMP moiety from GTP to Mo-molybdopterin (Mo-MPT) cofactor (Moco or molybdenum cofactor) to form Mo-molybdopterin guanine dinucleotide (Mo-MGD) cofactor. The protein is Probable molybdenum cofactor guanylyltransferase of Aquifex aeolicus (strain VF5).